We begin with the raw amino-acid sequence, 324 residues long: Elongation factor P--(R)-beta-lysine ligase (324 aa).

75 to 77 (SPE) lines the substrate pocket. ATP-binding positions include 99-101 (RNE) and asparagine 108. Substrate is bound at residue tyrosine 117. Residue 243 to 244 (EL) participates in ATP binding. Glutamate 250 contacts substrate. Glycine 299 is an ATP binding site.

The protein belongs to the class-II aminoacyl-tRNA synthetase family. EpmA subfamily. In terms of assembly, homodimer.

The enzyme catalyses D-beta-lysine + L-lysyl-[protein] + ATP = N(6)-((3R)-3,6-diaminohexanoyl)-L-lysyl-[protein] + AMP + diphosphate + H(+). In terms of biological role, with EpmB is involved in the beta-lysylation step of the post-translational modification of translation elongation factor P (EF-P). Catalyzes the ATP-dependent activation of (R)-beta-lysine produced by EpmB, forming a lysyl-adenylate, from which the beta-lysyl moiety is then transferred to the epsilon-amino group of a conserved specific lysine residue in EF-P. The sequence is that of Elongation factor P--(R)-beta-lysine ligase from Pseudoalteromonas translucida (strain TAC 125).